Consider the following 1108-residue polypeptide: MSSLSRELVFLILQFLEEEKFKESVHRLEKESGFFFNTKYFDEKVLAGEWDDVETYLSGFTKVDDNRYSMKIFFEIRKQKYLEALDRQEKAKAVEILVQDLRVFSTFNEELYKEITQLLTLQNFRENEQLSKYGDTKTARGIMLGELKKLIEANPLFRDKLMFPTLRSSRLRTLINQSLNWQHQLCKNPRPNPDIKTLFTDHTCTLPNGPLAPSAVNQPVTTLTKPAAYPSLGPHVPFPPGPAAANAGALASWMAAASGASAVQAAVVTPALMPQPQNQMSILKRPRTPPATPGIVDYQNPDHELMKRLRPAPSVEEVTYPAPRQQAPWSLEDLPTKAALALHQGSTVTSMEFYPMQNTLLLVGSATGEITLWELAARERLVSRPFKIWDMSNCSHQFQALIAKETPISVTRVAWSPDGNFIGVAFTKHLIQLYAFSGPNDLRQHTEIDAHVGAVNDLAFANPNRQLCVITCGDDKLIKVWDVSGRKHFTFEGHDAPVYSICPHYKENIQFIFSTAIDGKIKAWLYDNLGSRVDYDAPGKWCTRMLYSADGTRLFSCGTSKDGDSFLVEWNESEGSIKRTYKEFQKKLAGVVQFDTSKNHFLAVGEDGQIKFWDMNNINVLTSTDAEGGLPALPHLRFNKDGNLLAVTTADNGFKILANPAGFRSLRAMETPASETMRTPVDFKAVPGAPVASVNCKVERGSPVRHSQMLNGVDPSKSRIDDSTDKPKSWQLAEILDPSQCFQATLPDTAGSSTKVVQLLYTNSGAGILALGSNGIQRLWKWVPNEQNPSGKATATVVPQHWQPNSGLLMTNDVSGVNLENAAPCIALSKNDSYVMSAAGGKVSLFNMMTFKVMTTFMPPPPASTFLAFHPQDNNVIAIGMEDSTIHIYNVRVDEVKSKLKGHQKRITGLAFSTALNILVSSGADAQICFWSIDTWEKRKSVAIQMPAGKAANGDTRVQFHVDQLRILVVHETQLAVFDASKMECIRQWIPQDSLSAPISSAVYACNSQLIYTTFRDGNIGVFDADSLRLRCRISPSAYLPQGNQGLSPLVVAAHPQDPNQFAVGLNDGSVKMMEPTEGEGKWGMIPPSEAINSPSTTSNQTPEQLQR.

Residues 4–36 form the LisH domain; it reads LSRELVFLILQFLEEEKFKESVHRLEKESGFFF. The CTLH domain maps to 34-92; it reads FFFNTKYFDEKVLAGEWDDVETYLSGFTKVDDNRYSMKIFFEIRKQKYLEALDRQEKAK. A Phosphoserine modification is found at Ser214. WD repeat units lie at residues 343 to 383, 405 to 444, 450 to 491, 493 to 534, 583 to 623, and 628 to 667; these read HQGS…RLVS, ETPISVTRVAWSPDGNFIGVAFTKHLIQLYAFSGPNDLRQ, AHVG…HFTF, GHDA…SRVD, EFQK…VLTS, and GGLPALPHLRFNKDGNLLAVTTADNGFKILANPAGFRSLR. A disordered region spans residues 706 to 725; that stretch reads HSQMLNGVDPSKSRIDDSTD. Residues 716-725 are compositionally biased toward basic and acidic residues; the sequence is SKSRIDDSTD. WD repeat units lie at residues 751 to 790, 818 to 856, 859 to 899, 902 to 941, and 994 to 1033; these read GSSTKVVQLLYTNSGAGILALGSNGIQRLWKWVPNEQNPS, NLENAAPCIALSKNDSYVMSAAGGKVSLFNMMTFKVMTT, PPPP…VKSK, GHQKRITGLAFSTALNILVSSGADAQICFWSIDTWEKRKS, and SLSAPISSAVYACNSQLIYTTFRDGNIGVFDADSLRLRCR. A disordered region spans residues 1084–1108; sequence GMIPPSEAINSPSTTSNQTPEQLQR. Residues 1091-1108 show a composition bias toward polar residues; it reads AINSPSTTSNQTPEQLQR.

As to quaternary structure, tetramer. Interacts with NINJA/AFPH2. Interacts with SMXL6. Interacts with SPL (via EAR motif). Interacts with SPEAR3/TIE1.

The protein resides in the nucleus. Functionally, transcriptional corepressor. Negative regulator of jasmonate responses. This is Topless-related protein 3 (TPR3) from Arabidopsis thaliana (Mouse-ear cress).